Here is a 117-residue protein sequence, read N- to C-terminus: Large ribosomal subunit protein bL19 (117 aa).

This sequence belongs to the bacterial ribosomal protein bL19 family.

This protein is located at the 30S-50S ribosomal subunit interface and may play a role in the structure and function of the aminoacyl-tRNA binding site. The chain is Large ribosomal subunit protein bL19 from Blochmanniella floridana.